The sequence spans 318 residues: UDP-N-acetylenolpyruvoylglucosamine reductase (318 aa).

An FAD-binding PCMH-type domain is found at 39–202 (VGGPADLLVR…TRVQLTLRPG (164 aa)). Arginine 182 is an active-site residue. Positions 214-223 (DRDGRRRTQP) are enriched in basic and acidic residues. The tract at residues 214–235 (DRDGRRRTQPLDRPTFGSTFTN) is disordered. Serine 231 acts as the Proton donor in catalysis. The active site involves glutamate 301.

This sequence belongs to the MurB family. FAD is required as a cofactor.

It is found in the cytoplasm. The enzyme catalyses UDP-N-acetyl-alpha-D-muramate + NADP(+) = UDP-N-acetyl-3-O-(1-carboxyvinyl)-alpha-D-glucosamine + NADPH + H(+). The protein operates within cell wall biogenesis; peptidoglycan biosynthesis. Its function is as follows. Cell wall formation. This chain is UDP-N-acetylenolpyruvoylglucosamine reductase, found in Anaeromyxobacter sp. (strain Fw109-5).